The following is a 211-amino-acid chain: Metalloproteinase inhibitor 3 (211 aa).

Residues 1–23 form the signal peptide; it reads MTPWLGLVVLLGSWSLGDWGAEA. Cysteine 24 is a binding site for Zn(2+). 2 involved in metalloproteinase-binding regions span residues 24–27 and 88–89; these read CTCS and ES. 6 disulfide bridges follow: cysteine 24/cysteine 91, cysteine 26/cysteine 118, cysteine 36/cysteine 143, cysteine 145/cysteine 192, cysteine 150/cysteine 155, and cysteine 163/cysteine 184. One can recognise an NTR domain in the interval 24 to 143; the sequence is CTCSPSHPQD…GLNYRYHLGC (120 aa). The mediates interaction with EFEMP1 stretch occupies residues 105–188; it reads TGRVYDGKMY…SKHYACIRQK (84 aa). Asparagine 207 carries N-linked (GlcNAc...) asparagine glycosylation.

It belongs to the protease inhibitor I35 (TIMP) family. As to quaternary structure, interacts with EFEMP1. Interacts with KDR.

The protein resides in the secreted. It is found in the extracellular space. The protein localises to the extracellular matrix. Mediates a variety of processes including matrix regulation and turnover, inflammation, and angiogenesis, through reversible inhibition of zinc protease superfamily enzymes, primarily matrix metalloproteinases (MMPs). Regulates extracellular matrix (ECM) remodeling through inhibition of matrix metalloproteinases (MMP) including MMP-1, MMP-2, MMP-3, MMP-7, MMP-9, MMP-13, MMP-14 and MMP-15. Additionally, modulates the processing of amyloid precursor protein (APP) and apolipoprotein E receptor ApoER2 by inhibiting two alpha-secretases ADAM10 and ADAM17. Functions as a tumor suppressor and a potent inhibitor of angiogenesis. Exerts its anti-angiogenic effect by directly interacting with vascular endothelial growth factor (VEGF) receptor-2/KDR, preventing its binding to the VEGFA ligand. Selectively induces apoptosis in angiogenic endothelial cells through a caspase-independent cell death pathway. Mechanistically, inhibits matrix-induced focal adhesion kinase PTK2 tyrosine phosphorylation and association with paxillin/PXN and disrupts the incorporation of ITGB3, PTK2 and PXN into focal adhesion contacts on the matrix. The polypeptide is Metalloproteinase inhibitor 3 (TIMP3) (Equus caballus (Horse)).